Reading from the N-terminus, the 729-residue chain is Fatty acid oxidation complex subunit alpha (729 aa).

The enoyl-CoA hydratase/isomerase stretch occupies residues methionine 1 to lysine 189. Residue aspartate 296 participates in substrate binding. Positions glutamate 311 to alanine 729 are 3-hydroxyacyl-CoA dehydrogenase. Residues methionine 324, aspartate 343, valine 400–glutamate 402, lysine 407, and serine 429 each bind NAD(+). Histidine 450 (for 3-hydroxyacyl-CoA dehydrogenase activity) is an active-site residue. Asparagine 453 provides a ligand contact to NAD(+). Residues asparagine 500 and tyrosine 660 each coordinate substrate. The segment at arginine 708–alanine 729 is disordered.

This sequence in the N-terminal section; belongs to the enoyl-CoA hydratase/isomerase family. The protein in the C-terminal section; belongs to the 3-hydroxyacyl-CoA dehydrogenase family. As to quaternary structure, heterotetramer of two alpha chains (FadB) and two beta chains (FadA).

The catalysed reaction is a (3S)-3-hydroxyacyl-CoA + NAD(+) = a 3-oxoacyl-CoA + NADH + H(+). It carries out the reaction a (3S)-3-hydroxyacyl-CoA = a (2E)-enoyl-CoA + H2O. It catalyses the reaction a 4-saturated-(3S)-3-hydroxyacyl-CoA = a (3E)-enoyl-CoA + H2O. The enzyme catalyses (3S)-3-hydroxybutanoyl-CoA = (3R)-3-hydroxybutanoyl-CoA. The catalysed reaction is a (3Z)-enoyl-CoA = a 4-saturated (2E)-enoyl-CoA. It carries out the reaction a (3E)-enoyl-CoA = a 4-saturated (2E)-enoyl-CoA. Its pathway is lipid metabolism; fatty acid beta-oxidation. Functionally, involved in the aerobic and anaerobic degradation of long-chain fatty acids via beta-oxidation cycle. Catalyzes the formation of 3-oxoacyl-CoA from enoyl-CoA via L-3-hydroxyacyl-CoA. It can also use D-3-hydroxyacyl-CoA and cis-3-enoyl-CoA as substrate. The protein is Fatty acid oxidation complex subunit alpha of Escherichia coli O7:K1 (strain IAI39 / ExPEC).